We begin with the raw amino-acid sequence, 87 residues long: CRISPR-associated endoribonuclease Cas2 (87 aa).

Position 8 (aspartate 8) interacts with Mg(2+).

It belongs to the CRISPR-associated endoribonuclease Cas2 protein family. As to quaternary structure, homodimer, forms a heterotetramer with a Cas1 homodimer. Requires Mg(2+) as cofactor.

In terms of biological role, CRISPR (clustered regularly interspaced short palindromic repeat), is an adaptive immune system that provides protection against mobile genetic elements (viruses, transposable elements and conjugative plasmids). CRISPR clusters contain sequences complementary to antecedent mobile elements and target invading nucleic acids. CRISPR clusters are transcribed and processed into CRISPR RNA (crRNA). Functions as a ssRNA-specific endoribonuclease. Involved in the integration of spacer DNA into the CRISPR cassette. The sequence is that of CRISPR-associated endoribonuclease Cas2 from Frankia alni (strain DSM 45986 / CECT 9034 / ACN14a).